We begin with the raw amino-acid sequence, 590 residues long: Probable metalloendopeptidase G1-type (590 aa).

Position 41 (His41) interacts with Zn(2+). The active site involves Glu44. His45 contributes to the Zn(2+) binding site.

It belongs to the peptidase M44 family. Zn(2+) is required as a cofactor.

Seems to be involved in viral proteins maturation by cleavage at Ala-Gly-|-Xaa motifs. The protein is Probable metalloendopeptidase G1-type (GP045L) of Oryctolagus cuniculus (Rabbit).